A 157-amino-acid chain; its full sequence is Transcriptional repressor NrdR (157 aa).

A zinc finger spans residues 3-34 (CSNCQNKNTKVLDSRPIEEGRAIRRRRECERC). An ATP-cone domain is found at 49–139 (LIVVKKDGVR…VYRQFKDITV (91 aa)).

It belongs to the NrdR family. Zn(2+) serves as cofactor.

Negatively regulates transcription of bacterial ribonucleotide reductase nrd genes and operons by binding to NrdR-boxes. The chain is Transcriptional repressor NrdR from Oceanobacillus iheyensis (strain DSM 14371 / CIP 107618 / JCM 11309 / KCTC 3954 / HTE831).